A 165-amino-acid polypeptide reads, in one-letter code: Phosphopantetheine adenylyltransferase (165 aa).

T10 is a substrate binding site. ATP is bound by residues 10-11 (TF) and H18. Substrate-binding residues include K42, L75, and R89. Residues 90–92 (GVR), E100, and 125–131 (VSFISSS) each bind ATP.

This sequence belongs to the bacterial CoaD family. Homohexamer. Mg(2+) serves as cofactor.

The protein localises to the cytoplasm. The catalysed reaction is (R)-4'-phosphopantetheine + ATP + H(+) = 3'-dephospho-CoA + diphosphate. The protein operates within cofactor biosynthesis; coenzyme A biosynthesis; CoA from (R)-pantothenate: step 4/5. Reversibly transfers an adenylyl group from ATP to 4'-phosphopantetheine, yielding dephospho-CoA (dPCoA) and pyrophosphate. In Buchnera aphidicola subsp. Acyrthosiphon pisum (strain 5A), this protein is Phosphopantetheine adenylyltransferase.